We begin with the raw amino-acid sequence, 423 residues long: MKPNTTNLRNECWDTFSIPKRSQNIKINQSTKHQRSISDFVGTAGPGRQVGNWIIKKTIGAGSMGKVKLVVNILTGEKAALKMIPFTPNNTSQTVRVQREALLGRLLRHPNICRVIDCIRTPACTYILFEYVPGGQLLEYILARGKLDEDLARSFAMQLINALVYLHKNFIVHRDLKIENVLLTQDSRQVKLIDFGLSNFYSKDDLLRTYCGSLYFAAPELLDAKPYIGPEVDVWSLGVVIYVMVCGRVPFDDVSVPMLHSKIKSGKLEFPSYISEDCCSLIAAMLNVNPRKRCSLEQAAKFPWLKKNSFCLYLPIPLTSIPSTPSIRSHVFKPPFNLKVLQLLHEHGLASIPELKHELYMAYIERKTTSLVCLYLLGVESLAPALRIPTALPPVYSRHQRHHSEILGAMDLTEKITAMQCPP.

A phosphoserine mark is found at Ser36 and Ser38. One can recognise a Protein kinase domain in the interval 53–305 (WIIKKTIGAG…LEQAAKFPWL (253 aa)). Residues 59 to 67 (IGAGSMGKV) and Lys82 contribute to the ATP site. Asp175 serves as the catalytic Proton acceptor.

The protein belongs to the protein kinase superfamily. Ser/Thr protein kinase family.

Its subcellular location is the cytoplasm. It catalyses the reaction L-seryl-[protein] + ATP = O-phospho-L-seryl-[protein] + ADP + H(+). The catalysed reaction is L-threonyl-[protein] + ATP = O-phospho-L-threonyl-[protein] + ADP + H(+). The chain is Serine/threonine-protein kinase ppk25 (ppk25) from Schizosaccharomyces pombe (strain 972 / ATCC 24843) (Fission yeast).